The sequence spans 100 residues: Small ribosomal subunit protein uS14 (100 aa).

This sequence belongs to the universal ribosomal protein uS14 family. In terms of assembly, part of the 30S ribosomal subunit. Contacts proteins S3 and S10.

Binds 16S rRNA, required for the assembly of 30S particles and may also be responsible for determining the conformation of the 16S rRNA at the A site. This chain is Small ribosomal subunit protein uS14, found in Prochlorococcus marinus subsp. pastoris (strain CCMP1986 / NIES-2087 / MED4).